The chain runs to 401 residues: 1-deoxy-D-xylulose 5-phosphate reductoisomerase (401 aa).

The NADPH site is built by Thr10, Gly11, Ser12, Ile13, Gly36, Asn38, and Asn124. Lys125 contributes to the 1-deoxy-D-xylulose 5-phosphate binding site. Glu126 serves as a coordination point for NADPH. Mn(2+) is bound at residue Asp150. 1-deoxy-D-xylulose 5-phosphate contacts are provided by Ser151, Glu152, Ser186, and His209. Position 152 (Glu152) interacts with Mn(2+). Residue Gly215 participates in NADPH binding. 1-deoxy-D-xylulose 5-phosphate-binding residues include Ser222, Asn227, Lys228, and Glu231. Mn(2+) is bound at residue Glu231.

Belongs to the DXR family. The cofactor is Mg(2+). Requires Mn(2+) as cofactor.

The enzyme catalyses 2-C-methyl-D-erythritol 4-phosphate + NADP(+) = 1-deoxy-D-xylulose 5-phosphate + NADPH + H(+). It functions in the pathway isoprenoid biosynthesis; isopentenyl diphosphate biosynthesis via DXP pathway; isopentenyl diphosphate from 1-deoxy-D-xylulose 5-phosphate: step 1/6. Its function is as follows. Catalyzes the NADPH-dependent rearrangement and reduction of 1-deoxy-D-xylulose-5-phosphate (DXP) to 2-C-methyl-D-erythritol 4-phosphate (MEP). The protein is 1-deoxy-D-xylulose 5-phosphate reductoisomerase of Vibrio parahaemolyticus serotype O3:K6 (strain RIMD 2210633).